Reading from the N-terminus, the 126-residue chain is Large ribosomal subunit protein bL17 (126 aa).

It belongs to the bacterial ribosomal protein bL17 family. As to quaternary structure, part of the 50S ribosomal subunit. Contacts protein L32.

The protein is Large ribosomal subunit protein bL17 of Xylella fastidiosa (strain M12).